We begin with the raw amino-acid sequence, 359 residues long: MVSLSQDRMKQIEKRFEIIESQMAQNPNAETYVKLASEYAELQQIVTPIRTLNALYKEVTELEAMANTTQIDADMYALAQEELVLLRQKIEQLEQEIQILLLPKDIADEKSAIIEIRAGTGGSEAALFAGDLFRMYERYANAHKWKVEVVSLSDSEVGGYKEIIATISGKGVFSKLKFESGVHRVQRVPETETSGRIHTSAATVAVLPEAEEIDIEIRPEDIRIDTMRASGAGGQHVNTTDSAVRITHIPTGIMVVQAEKSQHQNRARALQILRSRLFDIERQKAESERSASRKTQVGSGDRSERIRTYNFPQGRVTDHRINLTLYKLDRIMEGDLDELINPLISNHQTALLTEINDNA.

The residue at position 235 (Q235) is an N5-methylglutamine. Residues 283-305 (QKAESERSASRKTQVGSGDRSER) are disordered.

This sequence belongs to the prokaryotic/mitochondrial release factor family. Post-translationally, methylated by PrmC. Methylation increases the termination efficiency of RF1.

The protein resides in the cytoplasm. Peptide chain release factor 1 directs the termination of translation in response to the peptide chain termination codons UAG and UAA. This is Peptide chain release factor 1 from Bartonella bacilliformis (strain ATCC 35685 / KC583 / Herrer 020/F12,63).